The primary structure comprises 197 residues: dITP/XTP pyrophosphatase (197 aa).

Residue threonine 10–lysine 15 participates in substrate binding. Residue aspartate 70 is the Proton acceptor of the active site. Residue aspartate 70 coordinates Mg(2+). Substrate is bound by residues serine 71, phenylalanine 151–aspartate 154, lysine 173, and histidine 178–arginine 179.

Belongs to the HAM1 NTPase family. As to quaternary structure, homodimer. Mg(2+) is required as a cofactor.

It carries out the reaction XTP + H2O = XMP + diphosphate + H(+). It catalyses the reaction dITP + H2O = dIMP + diphosphate + H(+). The catalysed reaction is ITP + H2O = IMP + diphosphate + H(+). In terms of biological role, pyrophosphatase that catalyzes the hydrolysis of nucleoside triphosphates to their monophosphate derivatives, with a high preference for the non-canonical purine nucleotides XTP (xanthosine triphosphate), dITP (deoxyinosine triphosphate) and ITP. Seems to function as a house-cleaning enzyme that removes non-canonical purine nucleotides from the nucleotide pool, thus preventing their incorporation into DNA/RNA and avoiding chromosomal lesions. The protein is dITP/XTP pyrophosphatase of Symbiobacterium thermophilum (strain DSM 24528 / JCM 14929 / IAM 14863 / T).